Consider the following 228-residue polypeptide: uncharacterized protein (228 aa).

It is found in the mitochondrion. This is an uncharacterized protein from Emericella nidulans (Aspergillus nidulans).